The chain runs to 361 residues: Peptide chain release factor 1 (361 aa).

Gln236 carries the post-translational modification N5-methylglutamine. Basic and acidic residues predominate over residues 285–309; it reads TAKDSARAADRKAQVGSGDRSERIR. The segment at 285-311 is disordered; that stretch reads TAKDSARAADRKAQVGSGDRSERIRTY.

The protein belongs to the prokaryotic/mitochondrial release factor family. In terms of processing, methylated by PrmC. Methylation increases the termination efficiency of RF1.

Its subcellular location is the cytoplasm. In terms of biological role, peptide chain release factor 1 directs the termination of translation in response to the peptide chain termination codons UAG and UAA. The chain is Peptide chain release factor 1 from Methylorubrum extorquens (strain CM4 / NCIMB 13688) (Methylobacterium extorquens).